A 396-amino-acid chain; its full sequence is GTPase Obg (396 aa).

An Obg domain is found at Met1–Leu159. An OBG-type G domain is found at Ala160–Glu333. GTP-binding positions include Gly166–Ser173, Phe191–Val195, Asp213–Gly216, Asn283–Asp286, and Ser314–Leu316. Mg(2+)-binding residues include Ser173 and Thr193. 2 disordered regions span residues Glu337–Met356 and Leu373–Pro396. The segment covering Glu347–Met356 has biased composition (basic and acidic residues). The span at Ser381–Pro396 shows a compositional bias: acidic residues.

This sequence belongs to the TRAFAC class OBG-HflX-like GTPase superfamily. OBG GTPase family. As to quaternary structure, monomer. The cofactor is Mg(2+).

It is found in the cytoplasm. In terms of biological role, an essential GTPase which binds GTP, GDP and possibly (p)ppGpp with moderate affinity, with high nucleotide exchange rates and a fairly low GTP hydrolysis rate. Plays a role in control of the cell cycle, stress response, ribosome biogenesis and in those bacteria that undergo differentiation, in morphogenesis control. This Hahella chejuensis (strain KCTC 2396) protein is GTPase Obg.